The primary structure comprises 273 residues: WIMGHIVNAIGQIDEFVNLGANSIETDVSFDSNANPEYTYHGIPCDCGRNCKKWENFNDFLKGLRSATTPGDSKYKEKLVLVVFDLKTGSLYDNQANDAGKKLAKNLLQRYWNNGNNGGRAYIVLSIPDLNHYPLIKGFTDTLKQEGHPELLDKLGYDFSGNDAIGDVANAYKKAGVSGHVWQSDDITNCLLRGLTRVREAVANRDSGKGYINKVYYWTVDKRASTRDALDAGVDGIMTNYPDVITDVLNEAAYKSKFRVATYDDNPWETFKK.

His-5 is a catalytic residue. 2 residues coordinate Mg(2+): Glu-25 and Asp-27. His-41 functions as the Nucleophile in the catalytic mechanism. Cystine bridges form between Cys-45-Cys-51 and Cys-47-Cys-190. Asp-85 provides a ligand contact to Mg(2+).

The protein belongs to the arthropod phospholipase D family. Class II subfamily. Requires Mg(2+) as cofactor. Expressed by the venom gland.

It localises to the secreted. It carries out the reaction an N-(acyl)-sphingosylphosphocholine = an N-(acyl)-sphingosyl-1,3-cyclic phosphate + choline. It catalyses the reaction an N-(acyl)-sphingosylphosphoethanolamine = an N-(acyl)-sphingosyl-1,3-cyclic phosphate + ethanolamine. The catalysed reaction is a 1-acyl-sn-glycero-3-phosphocholine = a 1-acyl-sn-glycero-2,3-cyclic phosphate + choline. The enzyme catalyses a 1-acyl-sn-glycero-3-phosphoethanolamine = a 1-acyl-sn-glycero-2,3-cyclic phosphate + ethanolamine. Its function is as follows. Dermonecrotic toxins cleave the phosphodiester linkage between the phosphate and headgroup of certain phospholipids (sphingolipid and lysolipid substrates), forming an alcohol (often choline) and a cyclic phosphate. This toxin acts on sphingomyelin (SM). It may also act on ceramide phosphoethanolamine (CPE), lysophosphatidylcholine (LPC) and lysophosphatidylethanolamine (LPE), but not on lysophosphatidylserine (LPS), and lysophosphatidylglycerol (LPG). It acts by transphosphatidylation, releasing exclusively cyclic phosphate products as second products. Induces dermonecrosis, hemolysis, increased vascular permeability, edema, inflammatory response, and platelet aggregation. The protein is Dermonecrotic toxin LspaSicTox-alphaIA1iii of Loxosceles spadicea (Recluse spider).